A 271-amino-acid polypeptide reads, in one-letter code: 2,3,4,5-tetrahydropyridine-2,6-dicarboxylate N-succinyltransferase (271 aa).

The substrate site is built by R102 and D139.

It belongs to the transferase hexapeptide repeat family. In terms of assembly, homotrimer.

The protein localises to the cytoplasm. The catalysed reaction is (S)-2,3,4,5-tetrahydrodipicolinate + succinyl-CoA + H2O = (S)-2-succinylamino-6-oxoheptanedioate + CoA. It participates in amino-acid biosynthesis; L-lysine biosynthesis via DAP pathway; LL-2,6-diaminopimelate from (S)-tetrahydrodipicolinate (succinylase route): step 1/3. This Coxiella burnetii (strain Dugway 5J108-111) protein is 2,3,4,5-tetrahydropyridine-2,6-dicarboxylate N-succinyltransferase.